Reading from the N-terminus, the 125-residue chain is uncharacterized protein (125 aa).

4 consecutive transmembrane segments (helical) span residues 9–29, 33–53, 56–76, and 100–120; these read IANA…TLTG, GEKT…NMVV, IVQV…TLVV, and FWTA…LNAF.

The protein resides in the cell membrane. This is an uncharacterized protein from Streptomyces coelicolor (strain ATCC BAA-471 / A3(2) / M145).